The primary structure comprises 460 residues: Dynactin subunit 4 (460 aa).

Alanine 2 is subject to N-acetylalanine. Residues 152–172 (QQLAQKEKVERDRKKLARRRN) adopt a coiled-coil conformation. Phosphoserine is present on serine 196. Residue lysine 215 forms a Glycyl lysine isopeptide (Lys-Gly) (interchain with G-Cter in SUMO2) linkage. Threonine 407 is subject to Phosphothreonine.

It belongs to the dynactin subunit 4 family. Subunit of dynactin, a multiprotein complex part of a tripartite complex with dynein and a adapter, such as BICDL1, BICD2 or HOOK3. The dynactin complex is built around ACTR1A/ACTB filament and consists of an actin-related filament composed of a shoulder domain, a pointed end and a barbed end. Its length is defined by its flexible shoulder domain. The soulder is composed of 2 DCTN1 subunits, 4 DCTN2 and 2 DCTN3. The 4 DCNT2 (via N-terminus) bind the ACTR1A filament and act as molecular rulers to determine the length. The pointed end is important for binding dynein-dynactin cargo adapters. Consists of 4 subunits: ACTR10, DCNT4, DCTN5 and DCTN6. The barbed end is composed of a CAPZA1:CAPZB heterodimers, which binds ACTR1A/ACTB filament and dynactin and stabilizes dynactin. Interacts with ATP7B, but not ATP7A, in a copper-dependent manner. Interacts with ANK2; this interaction is required for localization at costameres. Interacts with N4BP2L1.

The protein resides in the cytoplasm. It localises to the cytoskeleton. Its subcellular location is the microtubule organizing center. The protein localises to the centrosome. It is found in the stress fiber. The protein resides in the cell cortex. It localises to the myofibril. Its subcellular location is the sarcomere. Its function is as follows. Part of the dynactin complex that activates the molecular motor dynein for ultra-processive transport along microtubules. This Pongo abelii (Sumatran orangutan) protein is Dynactin subunit 4 (DCTN4).